Reading from the N-terminus, the 314-residue chain is ATP synthase gamma chain (314 aa).

Belongs to the ATPase gamma chain family. As to quaternary structure, F-type ATPases have 2 components, CF(1) - the catalytic core - and CF(0) - the membrane proton channel. CF(1) has five subunits: alpha(3), beta(3), gamma(1), delta(1), epsilon(1). CF(0) has three main subunits: a, b and c.

Its subcellular location is the cellular thylakoid membrane. Its function is as follows. Produces ATP from ADP in the presence of a proton gradient across the membrane. The gamma chain is believed to be important in regulating ATPase activity and the flow of protons through the CF(0) complex. The protein is ATP synthase gamma chain of Gloeothece citriformis (strain PCC 7424) (Cyanothece sp. (strain PCC 7424)).